Here is a 301-residue protein sequence, read N- to C-terminus: Phosphatidylglycerol--prolipoprotein diacylglyceryl transferase (301 aa).

The next 7 helical transmembrane spans lie at 17-37, 59-79, 97-117, 129-149, 203-223, 230-250, and 257-277; these read LAVR…IVVG, MLFY…VLFY, GGMS…LFAW, FVAP…FING, PSQL…LWLF, VGAA…TVEF, and FLGL…PMII. Arg142 is a binding site for a 1,2-diacyl-sn-glycero-3-phospho-(1'-sn-glycerol).

It belongs to the Lgt family.

The protein localises to the cell inner membrane. The enzyme catalyses L-cysteinyl-[prolipoprotein] + a 1,2-diacyl-sn-glycero-3-phospho-(1'-sn-glycerol) = an S-1,2-diacyl-sn-glyceryl-L-cysteinyl-[prolipoprotein] + sn-glycerol 1-phosphate + H(+). The protein operates within protein modification; lipoprotein biosynthesis (diacylglyceryl transfer). Its function is as follows. Catalyzes the transfer of the diacylglyceryl group from phosphatidylglycerol to the sulfhydryl group of the N-terminal cysteine of a prolipoprotein, the first step in the formation of mature lipoproteins. The protein is Phosphatidylglycerol--prolipoprotein diacylglyceryl transferase of Paraburkholderia phymatum (strain DSM 17167 / CIP 108236 / LMG 21445 / STM815) (Burkholderia phymatum).